The following is a 51-amino-acid chain: Putative ribosomal protein eL39-like 5 (51 aa).

It belongs to the eukaryotic ribosomal protein eL39 family.

This Homo sapiens (Human) protein is Putative ribosomal protein eL39-like 5 (RPL39P5).